A 293-amino-acid polypeptide reads, in one-letter code: Small ribosomal subunit protein uS2m (293 aa).

The segment covering 21–38 (GRAAQRGRTLGSAAAAAA) has biased composition (low complexity). Disordered stretches follow at residues 21-49 (GRAAQRGRTLGSAAAAAAREPERDSDRSA) and 263-293 (QGAPGPHPANPAAPGAPSPGAQAQLGMGHSP). Residues 39 to 49 (REPERDSDRSA) show a composition bias toward basic and acidic residues. Residues 267-279 (GPHPANPAAPGAP) show a composition bias toward pro residues.

The protein belongs to the universal ribosomal protein uS2 family. In terms of assembly, component of the mitochondrial ribosome small subunit (28S) which comprises a 12S rRNA and about 30 distinct proteins.

It is found in the mitochondrion. In terms of biological role, required for mitoribosome formation and stability, and mitochondrial translation. The protein is Small ribosomal subunit protein uS2m (MRPS2) of Bos taurus (Bovine).